A 353-amino-acid polypeptide reads, in one-letter code: DNA-directed RNA polymerase subunit alpha (353 aa).

The tract at residues 1 to 226 is alpha N-terminal domain (alpha-NTD); sequence MLISQRPTLT…ELFGLARELN (226 aa). Positions 241–353 are alpha C-terminal domain (alpha-CTD); it reads ADHIASFGLP…TEDYAETEQL (113 aa). The interval 326–353 is disordered; it reads ATGTWSDTDAGSFGDAEGTEDYAETEQL. The segment covering 342 to 353 has biased composition (acidic residues); sequence EGTEDYAETEQL.

The protein belongs to the RNA polymerase alpha chain family. In terms of assembly, homodimer. The RNAP catalytic core consists of 2 alpha, 1 beta, 1 beta' and 1 omega subunit. When a sigma factor is associated with the core the holoenzyme is formed, which can initiate transcription.

It carries out the reaction RNA(n) + a ribonucleoside 5'-triphosphate = RNA(n+1) + diphosphate. DNA-dependent RNA polymerase catalyzes the transcription of DNA into RNA using the four ribonucleoside triphosphates as substrates. This chain is DNA-directed RNA polymerase subunit alpha, found in Rhodococcus jostii (strain RHA1).